Reading from the N-terminus, the 147-residue chain is UPF0306 protein YE0465 (147 aa).

Belongs to the UPF0306 family.

The protein is UPF0306 protein YE0465 of Yersinia enterocolitica serotype O:8 / biotype 1B (strain NCTC 13174 / 8081).